Consider the following 325-residue polypeptide: Protein translocase subunit SecF (325 aa).

The next 6 helical transmembrane spans lie at 36–56, 148–168, 175–197, 202–224, 254–274, and 281–301; these read GYILSALLMVISLFFIITKGF, LAQGAVYATLATLAMVLIYVG, LGFGSIASLAHDVIITLGVFSAL, DLTFVAAILSVVGYSINDSIVVF, TIITSVTTLVVVMALFFFGGP, and LALLVGIGFGTYSSIFVAIAI.

It belongs to the SecD/SecF family. SecF subfamily. Forms a complex with SecD. Part of the essential Sec protein translocation apparatus which comprises SecA, SecYEG and auxiliary proteins SecDF-YajC and YidC.

It localises to the cell inner membrane. In terms of biological role, part of the Sec protein translocase complex. Interacts with the SecYEG preprotein conducting channel. SecDF uses the proton motive force (PMF) to complete protein translocation after the ATP-dependent function of SecA. The sequence is that of Protein translocase subunit SecF from Haemophilus influenzae (strain ATCC 51907 / DSM 11121 / KW20 / Rd).